Here is a 326-residue protein sequence, read N- to C-terminus: MLTLARQQQRQNIRWLLCLSVLMLLALLLSLCAGEQWISPGDWFTPRGELFVWQIRLPRTLAVLLVGAALAISGAVMQALFENPLAEPGLLGVSNGAGVGLIAAVLLGQGQLPNWALGLCAIAGALIITLILLRFARRHLSTSRLLLAGVALGIICSALMTWAIYFSTSVDLRQLMYWMMGGFGGVDWRQSWLMLALIPVLLWICCQSRPMNMLALGEISARQLGLPLWFWRNVLVAATGWMVGVSVALAGAIGFIGLVIPHILRLCGLTDHRVLLPGCALAGASALLLADIVARLALAAAELPIGVVTATLGAPVFIWLLLKAGR.

The next 9 membrane-spanning stretches (helical) occupy residues 15–35 (WLLC…CAGE), 61–81 (LAVL…QALF), 88–108 (PGLL…VLLG), 112–132 (LPNW…TLIL), 146–166 (LLAG…AIYF), 184–204 (GGVD…LLWI), 240–260 (GWMV…GLVI), 274–294 (VLLP…DIVA), and 302–322 (ELPI…WLLL).

It belongs to the binding-protein-dependent transport system permease family. FecCD subfamily. In terms of assembly, the complex is composed of two ATP-binding proteins (BtuD), two transmembrane proteins (BtuC) and a solute-binding protein (BtuF).

It is found in the cell inner membrane. Its function is as follows. Part of the ABC transporter complex BtuCDF involved in vitamin B12 import. Involved in the translocation of the substrate across the membrane. The sequence is that of Vitamin B12 import system permease protein BtuC from Escherichia coli O7:K1 (strain IAI39 / ExPEC).